The primary structure comprises 150 residues: MQIILLEKVVNLGNLGDIVKVKDGYARNFLIPNKQARRATKEALAEFEVRRAELEKIAAEKLAAATAQGEKLGGSTVQINQKAGVDGRLFGSVTNADIAEALVKQGFAVEKAQVRLPEGPLKLVGEHAVQVSLHTDVVVDVTVAVIGEHV.

This sequence belongs to the bacterial ribosomal protein bL9 family.

Its function is as follows. Binds to the 23S rRNA. This Paraburkholderia phytofirmans (strain DSM 17436 / LMG 22146 / PsJN) (Burkholderia phytofirmans) protein is Large ribosomal subunit protein bL9.